We begin with the raw amino-acid sequence, 254 residues long: Phosphoribosylaminoimidazole-succinocarboxamide synthase (254 aa).

It belongs to the SAICAR synthetase family.

The catalysed reaction is 5-amino-1-(5-phospho-D-ribosyl)imidazole-4-carboxylate + L-aspartate + ATP = (2S)-2-[5-amino-1-(5-phospho-beta-D-ribosyl)imidazole-4-carboxamido]succinate + ADP + phosphate + 2 H(+). It functions in the pathway purine metabolism; IMP biosynthesis via de novo pathway; 5-amino-1-(5-phospho-D-ribosyl)imidazole-4-carboxamide from 5-amino-1-(5-phospho-D-ribosyl)imidazole-4-carboxylate: step 1/2. This chain is Phosphoribosylaminoimidazole-succinocarboxamide synthase, found in Sinorhizobium fredii (strain NBRC 101917 / NGR234).